Consider the following 1068-residue polypeptide: Phosphatidylinositol 4,5-bisphosphate 3-kinase catalytic subunit alpha isoform (1068 aa).

A PI3K-ABD domain is found at 16 to 105 (MPPRILVECL…QPFLKVIEPV (90 aa)). Residues 187-289 (KGQIIVVIWV…GRMPNLMLMA (103 aa)) enclose the PI3K-RBD domain. The 158-residue stretch at 330-487 (INSALRIKIL…DWFSSVVKFP (158 aa)) folds into the C2 PI3K-type domain. Residues 517-694 (LARDNELREN…GLLLESYCRA (178 aa)) form the PIK helical domain. A PI3K/PI4K catalytic domain is found at 765–1051 (RLEECRIMSS…QMNDAHHGGW (287 aa)). The segment at 771–777 (IMSSAKR) is G-loop. The interval 912–920 (GIGDRHNSN) is catalytic loop. Residues 931–957 (HIDFGHFLDHKKKKFGYKRERVPFVLT) are activation loop.

This sequence belongs to the PI3/PI4-kinase family. As to quaternary structure, heterodimer of a catalytic subunit PIK3CA and a p85 regulatory subunit (PIK3R1, PIK3R2 or PIK3R3). Interacts with IRS1 in nuclear extracts. Interacts with RUFY3. Interacts with RASD2. Interacts with APPL1. Interacts with HRAS and KRAS. Interaction with HRAS/KRAS is required for PI3K pathway signaling and cell proliferation stimulated by EGF and FGF2. Interacts with FAM83B; activates the PI3K/AKT signaling cascade.

The enzyme catalyses a 1,2-diacyl-sn-glycero-3-phospho-(1D-myo-inositol-4,5-bisphosphate) + ATP = a 1,2-diacyl-sn-glycero-3-phospho-(1D-myo-inositol-3,4,5-trisphosphate) + ADP + H(+). The catalysed reaction is a 1,2-diacyl-sn-glycero-3-phospho-(1D-myo-inositol) + ATP = a 1,2-diacyl-sn-glycero-3-phospho-(1D-myo-inositol-3-phosphate) + ADP + H(+). It catalyses the reaction L-seryl-[protein] + ATP = O-phospho-L-seryl-[protein] + ADP + H(+). It carries out the reaction 1,2-dioctanoyl-sn-glycero-3-phospho-(1D-myo-inositol-4,5-bisphosphate) + ATP = 1,2-dioctanoyl-sn-glycero-3-phospho-(1D-myo-inositol-3,4,5-trisphosphate) + ADP + H(+). The enzyme catalyses 1-octadecanoyl-2-(5Z,8Z,11Z,14Z)-eicosatetraenoyl-sn-glycero-3-phospho-1D-myo-inositol 4,5-bisphosphate + ATP = 1-octadecanoyl-2-(5Z,8Z,11Z,14Z-eicosatetraenoyl)-sn-glycero-3-phospho-(1D-myo-inositol 3,4,5-triphosphate) + ADP + H(+). The protein operates within phospholipid metabolism; phosphatidylinositol phosphate biosynthesis. Its function is as follows. Phosphoinositide-3-kinase (PI3K) phosphorylates phosphatidylinositol (PI) and its phosphorylated derivatives at position 3 of the inositol ring to produce 3-phosphoinositides. Uses ATP and PtdIns(4,5)P2 (phosphatidylinositol 4,5-bisphosphate) to generate phosphatidylinositol 3,4,5-trisphosphate (PIP3). PIP3 plays a key role by recruiting PH domain-containing proteins to the membrane, including AKT1 and PDPK1, activating signaling cascades involved in cell growth, survival, proliferation, motility and morphology. Participates in cellular signaling in response to various growth factors. Involved in the activation of AKT1 upon stimulation by receptor tyrosine kinases ligands such as EGF, insulin, IGF1, VEGFA and PDGF. Involved in signaling via insulin-receptor substrate (IRS) proteins. Essential in endothelial cell migration during vascular development through VEGFA signaling, possibly by regulating RhoA activity. Required for lymphatic vasculature development, possibly by binding to RAS and by activation by EGF and FGF2, but not by PDGF. Regulates invadopodia formation through the PDPK1-AKT1 pathway. Participates in cardiomyogenesis in embryonic stem cells through a AKT1 pathway. Participates in vasculogenesis in embryonic stem cells through PDK1 and protein kinase C pathway. Also has serine-protein kinase activity: phosphorylates PIK3R1 (p85alpha regulatory subunit), EIF4EBP1 and HRAS. Plays a role in the positive regulation of phagocytosis and pinocytosis. In Mus musculus (Mouse), this protein is Phosphatidylinositol 4,5-bisphosphate 3-kinase catalytic subunit alpha isoform (Pik3ca).